Reading from the N-terminus, the 242-residue chain is Probable transcriptional regulatory protein Dred_1658 (242 aa).

Belongs to the TACO1 family.

It localises to the cytoplasm. The chain is Probable transcriptional regulatory protein Dred_1658 from Desulforamulus reducens (strain ATCC BAA-1160 / DSM 100696 / MI-1) (Desulfotomaculum reducens).